The primary structure comprises 77 residues: Metallothionein-like protein 2B (77 aa).

Belongs to the metallothionein superfamily. Type 15 family. In terms of tissue distribution, expressed in vascular tissues of all organs. Expressed in root and leaf phloem, pollen and root hairs.

Its function is as follows. Metallothioneins have a high content of cysteine residues that bind various heavy metals. Functions as a metal chelator of copper (Cu) and zinc (Zn). Functions cooperatively with the phytochelatin synthase PCS1 to protect plants from Cu and cadmium toxicity. Plays a role in Cu homeostasis, specifically in the remobilization of Cu from senescing leaves. The mobilization of Cu from internal sources is important for seed development. This Arabidopsis thaliana (Mouse-ear cress) protein is Metallothionein-like protein 2B (MT2B).